The primary structure comprises 814 residues: Threonine--tRNA ligase 2, cytoplasmic (814 aa).

Positions 2 to 72 (AAHIAQRLTV…SLREEQERAR (71 aa)) form a coiled coil. The segment at 62–142 (RSLREEQERA…GHKQEGPCAP (81 aa)) is disordered. Basic and acidic residues-rich tracts occupy residues 63-72 (SLREEQERAR), 88-102 (EEPK…EKGQ), and 119-137 (GNKK…HKQE). Residues 172 to 234 (KPIKITLADG…EQDSNVELLK (63 aa)) enclose the TGS domain. Residues 798–804 (KLKTLKK) carry the Nuclear localization signal motif.

The protein belongs to the class-II aminoacyl-tRNA synthetase family.

It localises to the cytoplasm. The protein localises to the nucleus. The catalysed reaction is tRNA(Thr) + L-threonine + ATP = L-threonyl-tRNA(Thr) + AMP + diphosphate + H(+). Catalyzes the attachment of threonine to tRNA(Thr) in a two-step reaction: threonine is first activated by ATP to form Thr-AMP and then transferred to the acceptor end of tRNA(Thr). Also edits incorrectly charged tRNA(Thr) via its editing domain, at the post-transfer stage. The chain is Threonine--tRNA ligase 2, cytoplasmic (tars3) from Xenopus tropicalis (Western clawed frog).